The primary structure comprises 2527 residues: Neurogenic locus notch homolog protein 1 (2527 aa).

The first 36 residues, 1-36, serve as a signal peptide directing secretion; sequence MGRSDSRAGALLEGGCEQNIDPRRAAHCHHPRLATS. Over 37–1741 the chain is Extracellular; the sequence is SLRCSQPSGT…VEPPLPSQLH (1705 aa). 33 disulfide bridges follow: cysteine 40–cysteine 53, cysteine 47–cysteine 62, cysteine 64–cysteine 73, cysteine 79–cysteine 90, cysteine 84–cysteine 103, cysteine 105–cysteine 114, cysteine 122–cysteine 133, cysteine 127–cysteine 143, cysteine 145–cysteine 154, cysteine 160–cysteine 171, cysteine 165–cysteine 180, cysteine 182–cysteine 191, cysteine 198–cysteine 211, cysteine 205–cysteine 220, cysteine 222–cysteine 231, cysteine 238–cysteine 249, cysteine 243–cysteine 259, cysteine 261–cysteine 270, cysteine 277–cysteine 288, cysteine 282–cysteine 297, cysteine 299–cysteine 308, cysteine 315–cysteine 328, cysteine 322–cysteine 337, cysteine 339–cysteine 348, cysteine 355–cysteine 366, cysteine 360–cysteine 375, cysteine 377–cysteine 386, cysteine 392–cysteine 403, cysteine 397–cysteine 414, cysteine 416–cysteine 425, cysteine 432–cysteine 445, cysteine 439–cysteine 454, and cysteine 456–cysteine 465. Asparagine 57 carries an N-linked (GlcNAc...) asparagine glycan. EGF-like domains follow at residues 75 to 115, 118 to 155, and 156 to 192; these read DPNP…PLCL, LDNA…KSCQ, and QADP…PTCR. An O-linked (Glc...) serine glycan is attached at serine 81. Threonine 89 is a glycosylation site (O-linked (Fuc...) threonine). Threonine 132 carries an O-linked (Fuc...) threonine glycan. Serine 162 carries an O-linked (Glc...) serine glycan. An EGF-like 4; calcium-binding domain is found at 194-232; sequence DVNECSQNPGLCRHGGTCHNEIGSYRCVCRATHTGPHCE. Residue threonine 210 is glycosylated (O-linked (Fuc...) threonine). One can recognise an EGF-like 5 domain in the interval 234–271; it reads PYVPCSPSPCQNGGTCRPTGDTTHECACLPGFAGQNCE. Threonine 248 carries an O-linked (Fuc...) threonine; alternate glycan. O-linked (GalNAc...) threonine; alternate glycosylation occurs at threonine 248. One can recognise an EGF-like 6; calcium-binding domain in the interval 273-309; the sequence is NVDDCPGNNCKNGGACVDGVNTYNCRCPPEWTGQYCT. Residues 311-349 enclose the EGF-like 7; calcium-binding domain; that stretch reads DVDECQLMPNACQNGGTCHNTHGGYNCVCVNGWTGEDCS. Threonine 327 is a glycosylation site (O-linked (Fuc...) threonine). The EGF-like 8; calcium-binding domain occupies 351–387; the sequence is NIDDCASAACFQGATCHDRVASFYCECPHGRTGLLCH. A glycan (O-linked (Glc...) serine) is linked at serine 357. Threonine 365 carries O-linked (Fuc...) threonine glycosylation. One can recognise an EGF-like 9 domain in the interval 388-426; it reads LNDACISNPCNEGSNCDTNPVNGKAICTCPSGYTGPACS. Serine 394 carries an O-linked (Glc...) serine glycan. The region spanning 428–466 is the EGF-like 10; calcium-binding domain; that stretch reads DVDECALGANPCEHAGKCLNTLGSFECQCLQGYTGPRCE. The tract at residues 436–437 is interaction with DLL4; the sequence is AN. The Ca(2+) site is built by threonine 448 and serine 451. O-linked (Glc...) serine glycosylation is present at serine 451. The interaction with DLL4 stretch occupies residues 464–468; it reads RCEID. Residues aspartate 468, valine 469, and glutamate 471 each contribute to the Ca(2+) site. The 37-residue stretch at 468-504 folds into the EGF-like 11; calcium-binding domain; sequence DVNECISNPCQNDATCLDQIGEFQCICMPGYEGVYCE. 3 disulfides stabilise this stretch: cysteine 472–cysteine 483, cysteine 477–cysteine 492, and cysteine 494–cysteine 503. Serine 474 carries O-linked (Glc...) serine glycosylation. O-linked (Fuc...) threonine glycosylation occurs at threonine 482. Aspartate 485 and glutamine 486 together coordinate Ca(2+). Residues asparagine 506, threonine 507, and glutamate 509 each coordinate Ca(2+). The EGF-like 12; calcium-binding domain occupies 506–542; sequence NTDECASSPCLHNGHCMDKINEFLCQCPKGFSGHLCQ. 28 disulfide bridges follow: cysteine 510–cysteine 521, cysteine 515–cysteine 530, cysteine 532–cysteine 541, cysteine 548–cysteine 559, cysteine 553–cysteine 568, cysteine 570–cysteine 579, cysteine 586–cysteine 596, cysteine 591–cysteine 605, cysteine 607–cysteine 616, cysteine 623–cysteine 634, cysteine 628–cysteine 643, cysteine 645–cysteine 654, cysteine 661–cysteine 671, cysteine 666–cysteine 680, cysteine 682–cysteine 691, cysteine 698–cysteine 709, cysteine 703–cysteine 718, cysteine 720–cysteine 729, cysteine 736–cysteine 746, cysteine 741–cysteine 755, cysteine 757–cysteine 766, cysteine 773–cysteine 784, cysteine 778–cysteine 793, cysteine 795–cysteine 804, cysteine 811–cysteine 822, cysteine 816–cysteine 831, cysteine 833–cysteine 842, and cysteine 849–cysteine 860. Serine 512 is a glycosylation site (O-linked (Glc...) serine). The Ca(2+) site is built by aspartate 523 and lysine 524. Residues 544–580 form the EGF-like 13; calcium-binding domain; the sequence is DVDECASTPCKNGAKCLDGPNTYTCVCTEGYTGTHCE. The O-linked (Glc...) serine glycan is linked to serine 550. An EGF-like 14; calcium-binding domain is found at 582–617; it reads DIDECDPDPCHYGFCKDGVATFTCLCQPGYTGHHCE. Residues 619 to 655 form the EGF-like 15; calcium-binding domain; sequence NINECHSQPCRHGGTCQDRDNSYLCLCLKGTTGPNCE. The O-linked (Glc...) serine glycan is linked to serine 625. O-linked (Fuc...) threonine glycosylation occurs at threonine 633. An EGF-like 16; calcium-binding domain is found at 657-692; that stretch reads NLDDCASNPCDSGTCLDKIDGYECACEPGYTGSMCN. O-linked (Glc...) serine glycosylation occurs at serine 663. The region spanning 694–730 is the EGF-like 17; calcium-binding domain; that stretch reads NIDECAGSPCHNGGTCEDGIAGFTCRCPEGYHDPTCL. O-linked (Fuc...) threonine glycosylation is present at threonine 708. One can recognise an EGF-like 18; calcium-binding domain in the interval 732–767; sequence EVNECNSNPCIHGACRDGLNGYKCDCAPGWSGTNCD. Serine 738 carries O-linked (Glc...) serine glycosylation. The region spanning 769–805 is the EGF-like 19 domain; the sequence is NNNECESNPCVNGGTCKDMTSGYVCTCREGFSGPNCQ. Serine 775 carries O-linked (Glc...) serine glycosylation. The O-linked (Fuc...) threonine glycan is linked to threonine 783. O-linked (GlcNAc) serine glycosylation occurs at serine 800. The 37-residue stretch at 807–843 folds into the EGF-like 20; calcium-binding domain; sequence NINECASNPCLNQGTCIDDVAGYKCNCPLPYTGATCE. An O-linked (Glc...) serine glycan is attached at serine 813. Threonine 821 carries an O-linked (Fuc...) threonine glycan. The EGF-like 21 domain maps to 845–883; that stretch reads VLAPCATSPCKNSGVCKESEDYESFSCVCPTGWQGQTCE. One can recognise an EGF-like 22; calcium-binding domain in the interval 885 to 921; that stretch reads DINECVKSPCRHGASCQNTNGSYRCLCQAGYTGRNCE. The N-linked (GlcNAc...) asparagine glycan is linked to asparagine 904. Threonine 916 carries an O-linked (GlcNAc) threonine glycan. Residues 923-959 enclose the EGF-like 23 domain; it reads DIDDCRPNPCHNGGSCTDGINMAFCDCLPGFQGAFCE. Serine 937 carries O-linked (Fuc) serine glycosylation. Residues 961–997 enclose the EGF-like 24; calcium-binding domain; the sequence is DINECASNPCRNGANCTDCVDSYTCTCPAGFNGIHCE. The O-linked (Glc...) serine glycan is linked to serine 967. N-linked (GlcNAc...) asparagine glycosylation is present at asparagine 975. EGF-like domains lie at 999–1035, 1037–1073, 1075–1111, 1113–1159, and 1161–1197; these read NTPD…SYCQ, DVNE…LNCQ, LVHW…FNCD, LSVS…SYCE, and EVDE…SNCS. Threonine 1013 is a glycosylation site (O-linked (Fuc...) threonine). O-linked (Glc...) serine glycosylation is present at serine 1043. The O-linked (Fuc...) threonine glycan is linked to threonine 1051. Serine 1081 is a glycosylation site (O-linked (Glc...) serine). Cysteines 1117 and 1138 form a disulfide. A glycan (O-linked (Fuc...) threonine) is linked at threonine 1175. Asparagine 1195 carries an N-linked (GlcNAc...) asparagine glycan. In terms of domain architecture, EGF-like 30; calcium-binding spans 1199 to 1235; sequence EINECLSQPCQNGGTCIDLTNTYKCSCPRGTQGVHCE. Serine 1205 is a glycosylation site (O-linked (Glc...) serine). An O-linked (Fuc...) threonine glycan is attached at threonine 1213. The 45-residue stretch at 1237 to 1281 folds into the EGF-like 31; calcium-binding domain; that stretch reads NVDDCHPHLDPASRSPKCFNNGTCVDQVGGYSCTCPPGFVGERCE. An N-linked (GlcNAc...) asparagine glycan is attached at asparagine 1257. EGF-like domains lie at 1283–1321, 1323–1362, 1364–1400, and 1403–1442; these read DINE…RRCE, VING…ATCE, DART…PECQ, and ASSP…LLCH. Serine 1289 carries O-linked (Glc...) serine glycosylation. O-linked (Fuc...) threonine glycosylation is present at threonine 1378. Residue threonine 1395 is glycosylated (O-linked (GlcNAc...) threonine). Residue threonine 1418 is glycosylated (O-linked (Fuc...) threonine; alternate). O-linked (GalNAc...) threonine; alternate glycosylation is present at threonine 1418. LNR repeat units follow at residues 1465 to 1505, 1506 to 1547, and 1548 to 1587; these read CELP…PWKN, CTQS…CNPL, and YDQY…RLAA. Residues aspartate 1473, asparagine 1476, aspartate 1491, and aspartate 1494 each contribute to the Ca(2+) site. N-linked (GlcNAc...) asparagine glycosylation is present at asparagine 1505. N-linked (GlcNAc...) asparagine glycosylation occurs at asparagine 1603. O-linked (GalNAc...) threonine glycosylation occurs at threonine 1731. An interaction with PSEN1 region spans residues 1734 to 1766; the sequence is PPLPSQLHLMYLAAAAFVLLFFVGCGVLLSRKR. A helical membrane pass occupies residues 1742-1762; the sequence is LMYLAAAAFVLLFFVGCGVLL. The Cytoplasmic portion of the chain corresponds to 1763–2527; it reads SRKRRRQHGQ…QITHIPEAFK (765 aa). Residue lysine 1765 forms a Glycyl lysine isopeptide (Lys-Gly) (interchain with G-Cter in ubiquitin) linkage. A disordered region spans residues 1786–1814; sequence KKKRREPLGEDSVGLKPLKNASDGALMDD. Threonine 1867 is subject to Phosphothreonine. 5 ANK repeats span residues 1933-1962, 1966-1996, 2000-2029, 2033-2062, and 2066-2095; these read TGET…DANI, MGRT…DLDA, DGTT…DVNA, LGKS…NKDM, and KEET…NRDI. The interval 1953 to 1961 is HIF1AN-binding; it reads LLEASADAN. Asparagine 1961 carries the post-translational modification (3S)-3-hydroxyasparagine; by HIF1AN; partial. The tract at residues 2020–2028 is HIF1AN-binding; that stretch reads LINSHADVN. Asparagine 2028 is subject to (3S)-3-hydroxyasparagine; by HIF1AN. Disordered stretches follow at residues 2157 to 2201, 2378 to 2424, and 2436 to 2527; these read SATQ…DSSS, QPQN…SLPV, and PTSL…EAFK. Residues 2378–2391 are compositionally biased toward low complexity; the sequence is QPQNLQPPSQPHLS. The span at 2436-2474 shows a compositional bias: polar residues; sequence PTSLPSSMVPPMTTTQFLTPPSQHSYSSSPVDNTPSHQL. A compositionally biased stretch (low complexity) spans 2484-2499; the sequence is PSPESPDQWSSSSPHS. The span at 2500-2520 shows a compositional bias: polar residues; it reads NISDWSEGISSPPTSMPSQIT.

The protein belongs to the NOTCH family. Heterodimer of a C-terminal fragment N(TM) and an N-terminal fragment N(EC) which are probably linked by disulfide bonds. Interacts with DNER, DTX1, DTX2 and RBPJ/RBPSUH. Also interacts with MAML1, MAML2 and MAML3 which act as transcriptional coactivators for NOTCH1. Notch 1 intracellular domain interacts with SNW1; the interaction involves multimerized NOTCH1 NICD and is implicated in a formation of an intermediate preactivation complex which associates with DNA-bound CBF-1/RBPJ. The activated membrane-bound form interacts with AAK1 which promotes NOTCH1 stabilization. Forms a trimeric complex with FBXW7 and SGK1. Interacts with HIF1AN. HIF1AN negatively regulates the function of notch intracellular domain (NICD), accelerating myogenic differentiation. Interacts (via NICD) with SNAI1 (via zinc fingers); the interaction induces SNAI1 degradation via MDM2-mediated ubiquitination and inhibits SNAI1-induced cell invasion. Interacts (via NICD) with MDM2A. Interacts (via NICD) with BCL6; the interaction decreases MAML1 recruitment by NOTCH1 NICD on target genes DNA and inhibits NOTCH1 transactivation activity. Interacts with THBS4. Interacts (via the EGF-like repeat region) with CCN3 (via CTCK domain). Interacts (via EGF-like domains) with DLL4 (via N-terminal DSL and MNNL domains). Interacts with ZMIZ1. Interacts (via NICD domain) with MEGF10 (via the cytoplasmic domain). Interacts with DLL1 and JAG1. Interacts (via NICD domain) with PRAG1. Forms a complex with PRAG1, N1ICD and MAML1, in a MAML1-dependent manner. Interacts (via transmembrane region) with PSEN1; the interaction is direct. Interacts with ZFP64. Synthesized in the endoplasmic reticulum as an inactive form which is proteolytically cleaved by a furin-like convertase in the trans-Golgi network before it reaches the plasma membrane to yield an active, ligand-accessible form. Cleavage results in a C-terminal fragment N(TM) and a N-terminal fragment N(EC). Following ligand binding, it is cleaved by ADAM17 to yield a membrane-associated intermediate fragment called notch extracellular truncation (NEXT). Following endocytosis, this fragment is then cleaved by one of the catalytic subunits of gamma-secretase (PSEN1 or PSEN2) to release a Notch-derived peptide containing the intracellular domain (NICD) from the membrane. In terms of processing, phosphorylated. Post-translationally, O-linked glycosylation by GALNT11 is involved in determination of left/right symmetry: glycosylation promotes activation of NOTCH1, possibly by promoting cleavage by ADAM17, modulating the balance between motile and immotile (sensory) cilia at the left-right organiser (LRO). O-glycosylated on the EGF-like domains. O-glucosylated at Ser-451 by KDELC1 and KDELC2. Contains both O-linked fucose and O-linked glucose in the EGF-like domains 11, 12 and 13, which are interacting with the residues on DLL4. MFNG-, RFNG- and LFNG-mediated modification of O-fucose residues at specific EGF-like domains results in inhibition of its activation by JAG1 and enhancement of its activation by DLL1 via an increased binding to DLL1. Ubiquitinated. Undergoes 'Lys-29'-linked polyubiquitination by ITCH; promotes the lysosomal degradation of non-activated internalized NOTCH1. Deubiquitination by USP12 is required for transport of internalized non-activated receptor from late endosomes to lysosomes for degradation. Monoubiquitination at Lys-1765 is required for activation by gamma-secretase cleavage, it promotes interaction with AAK1, which stabilizes it. Deubiquitination by EIF3F is necessary for nuclear import of activated Notch. In terms of processing, hydroxylated at Asn-1961 by HIF1AN. Hydroxylated at Asn-2028 by HIF1AN. Hydroxylation reduces affinity for HI1AN and may thus indirectly modulate negative regulation of NICD.

It localises to the cell membrane. Its subcellular location is the late endosome membrane. The protein resides in the nucleus. Its function is as follows. Functions as a receptor for membrane-bound ligands Jagged-1 (JAG1), Jagged-2 (JAG2) and Delta-1 (DLL1) to regulate cell-fate determination. Upon ligand activation through the released notch intracellular domain (NICD) it forms a transcriptional activator complex with RBPJ/RBPSUH and activates genes of the enhancer of split locus. Affects the implementation of differentiation, proliferation and apoptotic programs. Involved in angiogenesis; negatively regulates endothelial cell proliferation and migration and angiogenic sprouting. Involved in the maturation of both CD4(+) and CD8(+) cells in the thymus. Important for follicular differentiation and possibly cell fate selection within the follicle. During cerebellar development, functions as a receptor for neuronal DNER and is involved in the differentiation of Bergmann glia. Represses neuronal and myogenic differentiation. May play an essential role in postimplantation development, probably in some aspect of cell specification and/or differentiation. May be involved in mesoderm development, somite formation and neurogenesis. May enhance HIF1A function by sequestering HIF1AN away from HIF1A. Required for the THBS4 function in regulating protective astrogenesis from the subventricular zone (SVZ) niche after injury. Involved in determination of left/right symmetry by modulating the balance between motile and immotile (sensory) cilia at the left-right organiser (LRO). This chain is Neurogenic locus notch homolog protein 1 (NOTCH1), found in Cricetulus griseus (Chinese hamster).